The following is a 110-amino-acid chain: Thioredoxin (110 aa).

Residues 2–110 form the Thioredoxin domain; the sequence is SALLVEIDKD…IDAMIAKHVG (109 aa). A disulfide bridge connects residues Cys-33 and Cys-36.

This sequence belongs to the thioredoxin family.

Participates in various redox reactions through the reversible oxidation of its active center dithiol to a disulfide and catalyzes dithiol-disulfide exchange reactions. The sequence is that of Thioredoxin (trxA) from Peptoclostridium acidaminophilum (Eubacterium acidaminophilum).